Reading from the N-terminus, the 299-residue chain is ATP phosphoribosyltransferase (299 aa).

This sequence belongs to the ATP phosphoribosyltransferase family. Long subfamily. In terms of assembly, equilibrium between an active dimeric form, an inactive hexameric form and higher aggregates. Interconversion between the various forms is largely reversible and is influenced by the natural substrates and inhibitors of the enzyme. The cofactor is Mg(2+).

The protein localises to the cytoplasm. It catalyses the reaction 1-(5-phospho-beta-D-ribosyl)-ATP + diphosphate = 5-phospho-alpha-D-ribose 1-diphosphate + ATP. The protein operates within amino-acid biosynthesis; L-histidine biosynthesis; L-histidine from 5-phospho-alpha-D-ribose 1-diphosphate: step 1/9. With respect to regulation, feedback inhibited by histidine. Functionally, catalyzes the condensation of ATP and 5-phosphoribose 1-diphosphate to form N'-(5'-phosphoribosyl)-ATP (PR-ATP). Has a crucial role in the pathway because the rate of histidine biosynthesis seems to be controlled primarily by regulation of HisG enzymatic activity. The polypeptide is ATP phosphoribosyltransferase (Escherichia coli O157:H7).